The sequence spans 430 residues: Methylthioribose kinase 1 (430 aa).

Residues 52–56 (DGNLN), lysine 71, and 125–127 (RYI) contribute to the ATP site. Asparagine 56 provides a ligand contact to substrate. Substrate is bound at residue aspartate 246. 263–265 (DPE) is an ATP binding site. Substrate is bound at residue arginine 373.

This sequence belongs to the methylthioribose kinase family. Homodimer.

It catalyses the reaction 5-(methylsulfanyl)-D-ribose + ATP = 5-(methylsulfanyl)-alpha-D-ribose 1-phosphate + ADP + H(+). It functions in the pathway amino-acid biosynthesis; L-methionine biosynthesis via salvage pathway; S-methyl-5-thio-alpha-D-ribose 1-phosphate from S-methyl-5'-thioadenosine (hydrolase route): step 2/2. Catalyzes the phosphorylation of methylthioribose into methylthioribose-1-phosphate. This is Methylthioribose kinase 1 from Oryza sativa subsp. japonica (Rice).